The sequence spans 86 residues: Small ribosomal subunit protein uS17 (86 aa).

The protein belongs to the universal ribosomal protein uS17 family. Part of the 30S ribosomal subunit.

In terms of biological role, one of the primary rRNA binding proteins, it binds specifically to the 5'-end of 16S ribosomal RNA. The chain is Small ribosomal subunit protein uS17 from Helicobacter acinonychis (strain Sheeba).